We begin with the raw amino-acid sequence, 228 residues long: Cytidylate kinase (228 aa).

ATP is bound at residue 7 to 15 (GPVATGKST).

It belongs to the cytidylate kinase family. Type 1 subfamily.

Its subcellular location is the cytoplasm. It carries out the reaction CMP + ATP = CDP + ADP. It catalyses the reaction dCMP + ATP = dCDP + ADP. This is Cytidylate kinase from Protochlamydia amoebophila (strain UWE25).